We begin with the raw amino-acid sequence, 238 residues long: Leucyl/phenylalanyl-tRNA--protein transferase (238 aa).

This sequence belongs to the L/F-transferase family.

Its subcellular location is the cytoplasm. It carries out the reaction N-terminal L-lysyl-[protein] + L-leucyl-tRNA(Leu) = N-terminal L-leucyl-L-lysyl-[protein] + tRNA(Leu) + H(+). The catalysed reaction is N-terminal L-arginyl-[protein] + L-leucyl-tRNA(Leu) = N-terminal L-leucyl-L-arginyl-[protein] + tRNA(Leu) + H(+). It catalyses the reaction L-phenylalanyl-tRNA(Phe) + an N-terminal L-alpha-aminoacyl-[protein] = an N-terminal L-phenylalanyl-L-alpha-aminoacyl-[protein] + tRNA(Phe). Functions in the N-end rule pathway of protein degradation where it conjugates Leu, Phe and, less efficiently, Met from aminoacyl-tRNAs to the N-termini of proteins containing an N-terminal arginine or lysine. The polypeptide is Leucyl/phenylalanyl-tRNA--protein transferase (Pseudoalteromonas translucida (strain TAC 125)).